We begin with the raw amino-acid sequence, 154 residues long: Superoxide dismutase [Cu-Zn] (154 aa).

Cu cation is bound by residues histidine 47 and histidine 64. Cysteine 58 and cysteine 147 form a disulfide bridge. Histidine 64, histidine 72, histidine 81, and aspartate 84 together coordinate Zn(2+). Histidine 121 contacts Cu cation. Arginine 144 is a substrate binding site.

This sequence belongs to the Cu-Zn superoxide dismutase family. Homodimer. Cu cation is required as a cofactor. The cofactor is Zn(2+).

The protein resides in the cytoplasm. It catalyses the reaction 2 superoxide + 2 H(+) = H2O2 + O2. Its function is as follows. Destroys radicals which are normally produced within the cells and which are toxic to biological systems. The chain is Superoxide dismutase [Cu-Zn] (SOD1) from Pleurocordyceps sinensis (Polycephalomyces sinensis).